The primary structure comprises 452 residues: Ketoisovalerate reductase BEA2 (452 aa).

70–75 (GPGNIG) is an NADP(+) binding site. K285 (proton donor) is an active-site residue. Positions 289, 293, and 393 each coordinate substrate. An NADP(+)-binding site is contributed by E405.

It belongs to the ketopantoate reductase family.

It carries out the reaction (R)-2-hydroxy-3-methylbutanoate + NADP(+) = 3-methyl-2-oxobutanoate + NADPH + H(+). Its function is as follows. Ketoisovalerate reductase; part of the gene cluster that mediates the biosynthesis of beauvericin (BEA), a non-ribosomal cyclic hexadepsipeptide that shows antibiotic, antifungal, insecticidal, and cancer cell antiproliferative and antihaptotactic activity. Ketoisovalerate reductase BEA2 catalyzes the NADPH-specific reduction of ketoisovaleric acid to hydroxyisovalerate, a precursor for beauvericin biosynthesis. The nonribosomal cyclodepsipeptide synthetase BEA1 then catalyzes the formation of beauvericin via condensation and cyclization of 3 dipeptidol monomers, each composed of one unit of hydroxyisovalerate and one unit of N-methyl-phenylalanine. The sequence is that of Ketoisovalerate reductase BEA2 from Gibberella fujikuroi (strain CBS 195.34 / IMI 58289 / NRRL A-6831) (Bakanae and foot rot disease fungus).